A 668-amino-acid chain; its full sequence is UvrABC system protein B (668 aa).

The region spanning 31–416 is the Helicase ATP-binding domain; the sequence is QGITDGVPAQ…RGHIIEQIIR (386 aa). Residue 44–51 participates in ATP binding; the sequence is GTTGSGKT. The Beta-hairpin motif lies at 97–120; it reads YYDYYQPEAYIARSDTYIEKSLLI. A Helicase C-terminal domain is found at 433-596; that stretch reads QIDDLLEEIR…ITPQPIIKPI (164 aa). The 36-residue stretch at 621–656 folds into the UVR domain; that stretch reads EASIKTYEEAMYQAAQEFQFDEAVKYRDLMNAAKKQ.

It belongs to the UvrB family. In terms of assembly, forms a heterotetramer with UvrA during the search for lesions. Interacts with UvrC in an incision complex.

It is found in the cytoplasm. Its function is as follows. The UvrABC repair system catalyzes the recognition and processing of DNA lesions. A damage recognition complex composed of 2 UvrA and 2 UvrB subunits scans DNA for abnormalities. Upon binding of the UvrA(2)B(2) complex to a putative damaged site, the DNA wraps around one UvrB monomer. DNA wrap is dependent on ATP binding by UvrB and probably causes local melting of the DNA helix, facilitating insertion of UvrB beta-hairpin between the DNA strands. Then UvrB probes one DNA strand for the presence of a lesion. If a lesion is found the UvrA subunits dissociate and the UvrB-DNA preincision complex is formed. This complex is subsequently bound by UvrC and the second UvrB is released. If no lesion is found, the DNA wraps around the other UvrB subunit that will check the other stand for damage. The polypeptide is UvrABC system protein B (Chlamydia trachomatis serovar A (strain ATCC VR-571B / DSM 19440 / HAR-13)).